The following is a 459-amino-acid chain: Probable ECA polymerase (459 aa).

11 helical membrane-spanning segments follow: residues Leu3 to Leu23, Ile37 to Leu57, Val65 to Tyr85, Leu119 to Phe139, Gly154 to Leu174, Trp181 to Gly201, Ile206 to Trp226, Met227 to Tyr247, Leu340 to Ile360, Tyr377 to Ala397, and Val409 to Phe429.

It belongs to the WzyE family. As to quaternary structure, probably part of a complex composed of WzxE, WzyE and WzzE.

The protein resides in the cell inner membrane. The protein operates within bacterial outer membrane biogenesis; enterobacterial common antigen biosynthesis. Its function is as follows. Probably involved in the polymerization of enterobacterial common antigen (ECA) trisaccharide repeat units. The polypeptide is Probable ECA polymerase (Photorhabdus laumondii subsp. laumondii (strain DSM 15139 / CIP 105565 / TT01) (Photorhabdus luminescens subsp. laumondii)).